The sequence spans 398 residues: 1-deoxy-D-xylulose 5-phosphate reductoisomerase (398 aa).

Positions 10, 11, 12, 13, 36, 37, 38, and 124 each coordinate NADPH. Residue Lys125 coordinates 1-deoxy-D-xylulose 5-phosphate. Residue Glu126 participates in NADPH binding. Asp150 contributes to the Mn(2+) binding site. Ser151, Glu152, Ser186, and His209 together coordinate 1-deoxy-D-xylulose 5-phosphate. Residue Glu152 coordinates Mn(2+). Gly215 is an NADPH binding site. Ser222, Asn227, Lys228, and Glu231 together coordinate 1-deoxy-D-xylulose 5-phosphate. Glu231 is a binding site for Mn(2+).

The protein belongs to the DXR family. In terms of assembly, homodimer. Requires Mg(2+) as cofactor. The cofactor is Mn(2+).

It catalyses the reaction 2-C-methyl-D-erythritol 4-phosphate + NADP(+) = 1-deoxy-D-xylulose 5-phosphate + NADPH + H(+). It functions in the pathway isoprenoid biosynthesis; isopentenyl diphosphate biosynthesis via DXP pathway; isopentenyl diphosphate from 1-deoxy-D-xylulose 5-phosphate: step 1/6. Its function is as follows. Catalyzes the NADPH-dependent rearrangement and reduction of 1-deoxy-D-xylulose-5-phosphate (DXP) to 2-C-methyl-D-erythritol 4-phosphate (MEP). The protein is 1-deoxy-D-xylulose 5-phosphate reductoisomerase of Salmonella choleraesuis (strain SC-B67).